Here is a 429-residue protein sequence, read N- to C-terminus: Enolase (429 aa).

Position 163 (Gln-163) interacts with (2R)-2-phosphoglycerate. Glu-205 serves as the catalytic Proton donor. Mg(2+) is bound by residues Asp-242, Glu-287, and Asp-314. (2R)-2-phosphoglycerate contacts are provided by Lys-339, Arg-368, Ser-369, and Lys-390. Lys-339 serves as the catalytic Proton acceptor.

It belongs to the enolase family. Mg(2+) serves as cofactor.

It localises to the cytoplasm. The protein localises to the secreted. Its subcellular location is the cell surface. The catalysed reaction is (2R)-2-phosphoglycerate = phosphoenolpyruvate + H2O. It functions in the pathway carbohydrate degradation; glycolysis; pyruvate from D-glyceraldehyde 3-phosphate: step 4/5. Functionally, catalyzes the reversible conversion of 2-phosphoglycerate (2-PG) into phosphoenolpyruvate (PEP). It is essential for the degradation of carbohydrates via glycolysis. In Anaeromyxobacter sp. (strain Fw109-5), this protein is Enolase.